The chain runs to 180 residues: Inner membrane-spanning protein YciB (180 aa).

Transmembrane regions (helical) follow at residues 4-24 (FLSE…GGGI), 25-45 (QHAT…CYVI), 49-69 (VSKL…ITLI), 76-96 (IKIK…MSGI), 118-138 (ITLS…NEVV), and 150-170 (FKVF…LPLL).

The protein belongs to the YciB family.

The protein localises to the cell inner membrane. Plays a role in cell envelope biogenesis, maintenance of cell envelope integrity and membrane homeostasis. The chain is Inner membrane-spanning protein YciB from Rickettsia rickettsii (strain Iowa).